Reading from the N-terminus, the 670-residue chain is DNA ligase (670 aa).

Residues 33–37 (DAEFD), 82–83 (SL), and glutamate 113 each bind NAD(+). Lysine 115 functions as the N6-AMP-lysine intermediate in the catalytic mechanism. NAD(+) is bound by residues arginine 136, glutamate 170, lysine 285, and lysine 309. Residues cysteine 403, cysteine 406, cysteine 421, and cysteine 427 each contribute to the Zn(2+) site. Residues 587–670 (EQNLYLSGKT…EVLKAGDNNG (84 aa)) form the BRCT domain.

Belongs to the NAD-dependent DNA ligase family. LigA subfamily. Requires Mg(2+) as cofactor. It depends on Mn(2+) as a cofactor.

The catalysed reaction is NAD(+) + (deoxyribonucleotide)n-3'-hydroxyl + 5'-phospho-(deoxyribonucleotide)m = (deoxyribonucleotide)n+m + AMP + beta-nicotinamide D-nucleotide.. Its function is as follows. DNA ligase that catalyzes the formation of phosphodiester linkages between 5'-phosphoryl and 3'-hydroxyl groups in double-stranded DNA using NAD as a coenzyme and as the energy source for the reaction. It is essential for DNA replication and repair of damaged DNA. This chain is DNA ligase, found in Halothermothrix orenii (strain H 168 / OCM 544 / DSM 9562).